The chain runs to 607 residues: Zinc metalloproteinase-disintegrin-like atrase-A (607 aa).

The signal sequence occupies residues 1-20 (MIQALLVIICLAVFPHQGSS). Positions 21-196 (IILESGNVND…KTSQLTNTPE (176 aa)) are excised as a propeptide. Positions 205–398 (KYIEFYLVVD…ERPQCILNKP (194 aa)) constitute a Peptidase M12B domain. Glutamate 208 provides a ligand contact to Ca(2+). Asparagine 220 and asparagine 270 each carry an N-linked (GlcNAc...) asparagine glycan. Ca(2+) is bound at residue aspartate 290. A glycan (N-linked (GlcNAc...) asparagine) is linked at asparagine 301. 3 disulfide bridges follow: cysteine 314–cysteine 393, cysteine 353–cysteine 377, and cysteine 355–cysteine 360. Histidine 338, histidine 342, and histidine 348 together coordinate Zn(2+). Positions 393, 396, 411, 413, 415, 418, and 421 each coordinate Ca(2+). The Disintegrin domain maps to 406 to 492 (RPVCGNNFVE…ECPTDSLQRN (87 aa)). 14 cysteine pairs are disulfide-bonded: cysteine 409–cysteine 438, cysteine 420–cysteine 433, cysteine 422–cysteine 428, cysteine 432–cysteine 455, cysteine 446–cysteine 452, cysteine 451–cysteine 477, cysteine 464–cysteine 484, cysteine 471–cysteine 503, cysteine 496–cysteine 508, cysteine 515–cysteine 565, cysteine 530–cysteine 573, cysteine 543–cysteine 553, cysteine 560–cysteine 599, and cysteine 593–cysteine 604. Residue asparagine 434 is glycosylated (N-linked (GlcNAc...) asparagine). The D/ECD-tripeptide signature appears at 470–472 (DCD). Positions 472, 473, 475, 487, and 488 each coordinate Ca(2+). Asparagine 522 carries an N-linked (GlcNAc...) asparagine glycan.

The protein belongs to the venom metalloproteinase (M12B) family. P-III subfamily. P-IIIa sub-subfamily. Monomer. Zn(2+) serves as cofactor. In terms of tissue distribution, expressed by the venom gland.

The protein localises to the secreted. Snake venom zinc metalloproteinase that inhibits platelet aggregation by cleaving platelet glycoprotein Ib alpha (GP1BA) at Glu-298/Asp-299, and abolishes binding of von Willebrand factor (VWF) to GPIBA. This Naja atra (Chinese cobra) protein is Zinc metalloproteinase-disintegrin-like atrase-A.